The primary structure comprises 333 residues: UDP-3-O-acylglucosamine N-acyltransferase (333 aa).

Catalysis depends on His-225, which acts as the Proton acceptor.

The protein belongs to the transferase hexapeptide repeat family. LpxD subfamily. Homotrimer.

It catalyses the reaction a UDP-3-O-[(3R)-3-hydroxyacyl]-alpha-D-glucosamine + a (3R)-hydroxyacyl-[ACP] = a UDP-2-N,3-O-bis[(3R)-3-hydroxyacyl]-alpha-D-glucosamine + holo-[ACP] + H(+). It participates in bacterial outer membrane biogenesis; LPS lipid A biosynthesis. Its function is as follows. Catalyzes the N-acylation of UDP-3-O-acylglucosamine using 3-hydroxyacyl-ACP as the acyl donor. Is involved in the biosynthesis of lipid A, a phosphorylated glycolipid that anchors the lipopolysaccharide to the outer membrane of the cell. The chain is UDP-3-O-acylglucosamine N-acyltransferase from Paracidovorax citrulli (strain AAC00-1) (Acidovorax citrulli).